The chain runs to 996 residues: Oxysterol-binding protein homolog 3 (996 aa).

The tract at residues 1–183 is GOLD domain; that stretch reads METIDIQNRS…KKKILFNASV (183 aa). The disordered stretch occupies residues 75-114; it reads GSSSNIEEHHRRSSQHSHSSSNGSDNKRKERSYSSLSISG. 2 positions are modified to phosphoserine: Ser190 and Ser193. A Phosphothreonine modification is found at Thr210. In terms of domain architecture, PH spans 221–315; it reads GRYLQGYLLK…WVDALQTCFD (95 aa). Thr323 bears the Phosphothreonine mark. Ser324 carries the post-translational modification Phosphoserine. Phosphothreonine is present on residues Thr325 and Thr352. The segment at 338-372 is disordered; that stretch reads EVINKSSPQDHDHLTPTATTKSALSHRQHTQKDMD. Positions 514–520 match the FFAT motif; sequence EFFDAEE. The segment at 556–611 is disordered; the sequence is KEVQLSGSEQIASSSVESYTTNDENHSRKHLKNRHKNRRRGHPHHQKTKSAQSSTE. Polar residues predominate over residues 558 to 577; sequence VQLSGSEQIASSSVESYTTN. Over residues 582–603 the composition is skewed to basic residues; sequence SRKHLKNRHKNRRRGHPHHQKT. Ser605 carries the post-translational modification Phosphoserine. Residues 642 to 982 form an OSBP-related domain (ORD) region; that stretch reads SLLSFLRKNV…YITGPKSYWE (341 aa). A 1,2-diacyl-sn-glycero-3-phospho-(1D-myo-inositol 4-phosphate) contacts are provided by residues 657–660, Lys717, 745–746, and 945–949; these read SIAM, HR, and EQLQR.

It belongs to the OSBP family. Interacts with SCS2.

Its subcellular location is the cytoplasm. It localises to the endoplasmic reticulum membrane. In terms of biological role, lipid transport protein (LTP) involved in non-vesicular transfer of lipids between membranes. Functions in phosphoinositide-coupled directional transport of various lipids by carrying the lipid molecule in a hydrophobic pocket and transferring it between membranes through the cytosol. Involved in maintenance of intracellular sterol distribution and homeostasis. May serve as a sensor of PI4P levels at PM-ER membrane contact site, regulating PI4P phosphatase SAC1 activity. May be involved in ergosterol transport from the plasma membrane (PM) to the ER, however it does not bind sterols directly. Plays a role in the positive regulation of vesicular transport of ceramide from the ER to the Golgi, negatively regulating COPII-mediated ER export of cargos. This is Oxysterol-binding protein homolog 3 from Saccharomyces cerevisiae (strain ATCC 204508 / S288c) (Baker's yeast).